The primary structure comprises 286 residues: Phosphate import ATP-binding protein PstB (286 aa).

Positions 40–281 (VVAKDFSIFY…PRDRMTEDYI (242 aa)) constitute an ABC transporter domain. 72–79 (GPSGCGKS) serves as a coordination point for ATP.

This sequence belongs to the ABC transporter superfamily. Phosphate importer (TC 3.A.1.7) family. In terms of assembly, the complex is composed of two ATP-binding proteins (PstB), two transmembrane proteins (PstC and PstA) and a solute-binding protein (PstS).

The protein localises to the cell inner membrane. The enzyme catalyses phosphate(out) + ATP + H2O = ADP + 2 phosphate(in) + H(+). In terms of biological role, part of the ABC transporter complex PstSACB involved in phosphate import. Responsible for energy coupling to the transport system. The chain is Phosphate import ATP-binding protein PstB from Chlorobium luteolum (strain DSM 273 / BCRC 81028 / 2530) (Pelodictyon luteolum).